A 301-amino-acid chain; its full sequence is Putative S-adenosyl-L-methionine-dependent methyltransferase BCG_0775c (301 aa).

Residues aspartate 130 and 159–160 (DL) each bind S-adenosyl-L-methionine.

This sequence belongs to the UPF0677 family.

In terms of biological role, exhibits S-adenosyl-L-methionine-dependent methyltransferase activity. This chain is Putative S-adenosyl-L-methionine-dependent methyltransferase BCG_0775c, found in Mycobacterium bovis (strain BCG / Pasteur 1173P2).